We begin with the raw amino-acid sequence, 489 residues long: Ribonuclease G (489 aa).

One can recognise an S1 motif domain in the interval 39–128 (GNIYKGRVSR…LTTDITLPSR (90 aa)). Asp-304 and Asp-347 together coordinate Mg(2+).

It belongs to the RNase E/G family. RNase G subfamily. In terms of assembly, homodimer, in equilibrium with possible higher multimers. It depends on Mg(2+) as a cofactor.

Its subcellular location is the cytoplasm. Functionally, an endonuclease that acts in the processing of the 5'-end of 16S rRNA and 23S rRNA. It prefers 5'-monophosphorylated substrates and cleaves single-stranded sites rich in A and U residues; contributes to tRNA processing and mRNA turnover. This chain is Ribonuclease G (rng), found in Escherichia coli O157:H7.